The primary structure comprises 154 residues: Jupiter microtubule associated homolog 1 (154 aa).

Met1 is subject to N-acetylmethionine. Residues 1-19 (MTTTTTFKGVDPNSRNSSR) are compositionally biased toward polar residues. The segment at 1-154 (MTTTTTFKGV…PGGKSSLVLG (154 aa)) is disordered. Thr2 is modified (N-acetylthreonine; in Hematological and neurological expressed 1 protein, N-terminally processed). Ser28 and Ser31 each carry phosphoserine. Residue Thr54 is modified to Phosphothreonine. A phosphoserine mark is found at Ser71, Ser87, Ser88, and Ser92. Residues 79–91 (SPGTQRSNSSEAS) show a composition bias toward polar residues. Residues 96 to 108 (LDLKGEGDMHENV) are compositionally biased toward basic and acidic residues. Residues 125–138 (PAAPVPSPVAPAPV) show a composition bias toward pro residues. Ser131 carries the post-translational modification Phosphoserine. N6-acetyllysine is present on Lys148.

This sequence belongs to the JUPITER family. In terms of assembly, interacts with the complex composed, at least, of APC, CTNNB1 and GSK3B; the interaction takes place with the inactive form of GSK3B (phosphorylated at 'Ser-9'). As to expression, expressed in yolk sac, fetal brain, brain, spleen and bone marrow.

It is found in the nucleus. The protein resides in the cytoplasm. Modulates negatively AKT-mediated GSK3B signaling. Induces CTNNB1 'Ser-33' phosphorylation and degradation through the suppression of the inhibitory 'Ser-9' phosphorylation of GSK3B, which represses the function of the APC:CTNNB1:GSK3B complex and the interaction with CDH1/E-cadherin in adherent junctions. Plays a role in the regulation of cell cycle and cell adhesion. Has an inhibitory role on AR-signaling pathway through the induction of receptor proteasomal degradation. The polypeptide is Jupiter microtubule associated homolog 1 (Mus musculus (Mouse)).